We begin with the raw amino-acid sequence, 463 residues long: MGAKTFEGGDNHEDATNALSTKSNAVGGKPRGANMLEDGDGEFGTDDDDDGDGQDSSLAVVNPEDGSKPKKRKRSKKKKSNKKKPGDGAQQQTSPPRVPLSQLFPDGKYPVGQMVKVPAVNLRRTTDEELRYLSRGTITNDEALSDYRKAAEVHRQVRHWVHETVHPGQSLTELAVGIEDGVRALLGHQGLEPGDSLKGGMGFPTGLALNNCAAHYTPNPGQKDIILKKEDVMKVDFGVHVNGWIVDSAFTVTFDPVYDNLLAAVKDATNTGLKCAGVDARVGEIGGYIQEAMESYEVEINGKVHPVKAIRNITGHDILPYRIHGGKQVPFIKSKDQTKMEEGEVFAIETFGTTGKGYMMDGPGVYGYSKDPDARNMHLPLASARALLKTINQNFGTIPFCRRYLDRLGLEKYLLGMNSLISHGIVHMYPPLVDIPGSYTAQFEHTILIKSSGNEIISRGDDY.

The tract at residues 1–107 (MGAKTFEGGD…VPLSQLFPDG (107 aa)) is disordered. A compositionally biased stretch (acidic residues) spans 37-53 (EDGDGEFGTDDDDDGDG). Positions 69 to 83 (PKKRKRSKKKKSNKK) are enriched in basic residues. Histidine 215 serves as a coordination point for substrate. Residues aspartate 236, aspartate 247, and histidine 316 each coordinate a divalent metal cation. Substrate is bound at residue histidine 324. The a divalent metal cation site is built by glutamate 349 and glutamate 444.

It belongs to the peptidase M24A family. Methionine aminopeptidase eukaryotic type 2 subfamily. Co(2+) serves as cofactor. Zn(2+) is required as a cofactor. It depends on Mn(2+) as a cofactor. The cofactor is Fe(2+).

Its subcellular location is the cytoplasm. It carries out the reaction Release of N-terminal amino acids, preferentially methionine, from peptides and arylamides.. Cotranslationally removes the N-terminal methionine from nascent proteins. The N-terminal methionine is often cleaved when the second residue in the primary sequence is small and uncharged (Met-Ala-, Cys, Gly, Pro, Ser, Thr, or Val). The protein is Methionine aminopeptidase 2-2 of Talaromyces marneffei (strain ATCC 18224 / CBS 334.59 / QM 7333) (Penicillium marneffei).